An 853-amino-acid chain; its full sequence is EF-hand domain-containing family member B (853 aa).

Disordered stretches follow at residues 1-31 and 244-266; these read MCSFVRVGSPKPLQTSASPLEMSSLRRTRAP and AQQPEEKKEPGSTEPGVEPPGNI. EF-hand domains lie at 581–616 and 617–652; these read QNFDTLQVAFRHYDKKGDGVIDRAELHEACVQANLH and LDKMLLDHLFDYCDVDQDGLINYLEFANFLNWKDRI. Residues Asp-594, Asp-598, Glu-605, Asp-630, Asp-632, Asp-634, and Glu-641 each contribute to the Ca(2+) site.

In terms of assembly, microtubule inner protein component of sperm flagellar doublet microtubules. Interacts with STIM1 and ORAI1; the interactions take place upon Ca(2+)-store depletion and dissociate through a Ca(2+)-dependent mechanism. Interaction with STIM1 inhibits STIM1 interaction with SARAF.

The protein resides in the cytoplasm. The protein localises to the cytoskeleton. It localises to the cilium axoneme. It is found in the flagellum axoneme. Functionally, microtubule inner protein (MIP) part of the dynein-decorated doublet microtubules (DMTs) in cilia axoneme, which is required for motile cilia beating. Cytosolic sensor for calcium, modulates the interaction of STIM1 and ORAI1 upon store depletion and the activation of store-operated Ca(2+) entry (SOCE) and NFAT translocation from cytosol to nucleus. This Mus musculus (Mouse) protein is EF-hand domain-containing family member B.